We begin with the raw amino-acid sequence, 585 residues long: Probable inactive serine/threonine-protein kinase slob1 (585 aa).

The FYVE-type zinc-finger motif lies at 21–82; it reads DQSSLECNDC…LCRSCNNSFE (62 aa). The Zn(2+) site is built by C27, C30, C43, C46, C51, C54, C74, and C77. The region spanning 108-478 is the Protein kinase domain; that stretch reads SKPLQDIGHT…STSLLNNSFN (371 aa). Low complexity-rich tracts occupy residues 426–456 and 466–503; these read ISKL…NISS and LPSS…ISSP. Positions 426-585 are disordered; the sequence is ISKLSSSSSN…SLKPSSTKKK (160 aa). Residues 513–532 show a composition bias toward pro residues; it reads TPPPPPPPPKSAPPPPPPPS. Residues 533–542 are compositionally biased toward low complexity; that stretch reads SSKLPPSSSS. The WH2 domain occupies 542-562; the sequence is SRNSLLESIRNADNAKKLKKT.

Belongs to the protein kinase superfamily. Ser/Thr protein kinase family.

This chain is Probable inactive serine/threonine-protein kinase slob1 (slob1), found in Dictyostelium discoideum (Social amoeba).